The chain runs to 353 residues: Photosystem II protein D1 (353 aa).

Threonine 2 carries the post-translational modification N-acetylthreonine. Residue threonine 2 is modified to Phosphothreonine. 3 helical membrane-spanning segments follow: residues 29–46, 118–133, and 142–156; these read YIGWFGVLMIPTLLTATS, HFLLGVACYMGREWEL, and WIAVAYSAPVAAATA. Histidine 118 contacts chlorophyll a. Tyrosine 126 is a pheophytin a binding site. Residues aspartate 170 and glutamate 189 each coordinate [CaMn4O5] cluster. The chain crosses the membrane as a helical span at residues 197–218; the sequence is FHMLGVAGVFGGSLFSAMHGSL. Histidine 198 contributes to the chlorophyll a binding site. Residues histidine 215 and 264-265 contribute to the a quinone site; that span reads SF. Histidine 215 serves as a coordination point for Fe cation. Residue histidine 272 coordinates Fe cation. Residues 274-288 traverse the membrane as a helical segment; sequence FLAAWPVVGIWFTAL. The [CaMn4O5] cluster site is built by histidine 332, glutamate 333, aspartate 342, and alanine 344. Positions 345–353 are excised as a propeptide; sequence AIDAPSING.

It belongs to the reaction center PufL/M/PsbA/D family. PSII is composed of 1 copy each of membrane proteins PsbA, PsbB, PsbC, PsbD, PsbE, PsbF, PsbH, PsbI, PsbJ, PsbK, PsbL, PsbM, PsbT, PsbX, PsbY, PsbZ, Psb30/Ycf12, at least 3 peripheral proteins of the oxygen-evolving complex and a large number of cofactors. It forms dimeric complexes. It depends on The D1/D2 heterodimer binds P680, chlorophylls that are the primary electron donor of PSII, and subsequent electron acceptors. It shares a non-heme iron and each subunit binds pheophytin, quinone, additional chlorophylls, carotenoids and lipids. D1 provides most of the ligands for the Mn4-Ca-O5 cluster of the oxygen-evolving complex (OEC). There is also a Cl(-1) ion associated with D1 and D2, which is required for oxygen evolution. The PSII complex binds additional chlorophylls, carotenoids and specific lipids. as a cofactor. In terms of processing, tyr-161 forms a radical intermediate that is referred to as redox-active TyrZ, YZ or Y-Z. C-terminally processed by CTPA; processing is essential to allow assembly of the oxygen-evolving complex and thus photosynthetic growth.

The protein localises to the plastid. It is found in the chloroplast thylakoid membrane. The catalysed reaction is 2 a plastoquinone + 4 hnu + 2 H2O = 2 a plastoquinol + O2. Functionally, photosystem II (PSII) is a light-driven water:plastoquinone oxidoreductase that uses light energy to abstract electrons from H(2)O, generating O(2) and a proton gradient subsequently used for ATP formation. It consists of a core antenna complex that captures photons, and an electron transfer chain that converts photonic excitation into a charge separation. The D1/D2 (PsbA/PsbD) reaction center heterodimer binds P680, the primary electron donor of PSII as well as several subsequent electron acceptors. The sequence is that of Photosystem II protein D1 from Glycine max (Soybean).